The sequence spans 385 residues: Cytochrome b (385 aa).

4 helical membrane passes run 32 to 52 (MGSL…FMAM), 76 to 98 (YILR…MHMA), 113 to 133 (LWNV…LGYC), and 179 to 199 (FFAL…MHLM). Positions 82 and 96 each coordinate heme b. His183 and His197 together coordinate heme b. Residue His202 participates in a ubiquinone binding. 4 consecutive transmembrane segments (helical) span residues 225–245 (FIFK…LFVF), 289–309 (LLGV…PFTD), 321–341 (LSKF…QIGA), and 348–368 (YVLM…IIVP).

Belongs to the cytochrome b family. In terms of assembly, fungal cytochrome b-c1 complex contains 10 subunits; 3 respiratory subunits, 2 core proteins and 5 low-molecular weight proteins. Cytochrome b-c1 complex is a homodimer. It depends on heme b as a cofactor.

Its subcellular location is the mitochondrion inner membrane. In terms of biological role, component of the ubiquinol-cytochrome c reductase complex (complex III or cytochrome b-c1 complex) that is part of the mitochondrial respiratory chain. The b-c1 complex mediates electron transfer from ubiquinol to cytochrome c. Contributes to the generation of a proton gradient across the mitochondrial membrane that is then used for ATP synthesis. In Saccharomyces paradoxus (Yeast), this protein is Cytochrome b (COB).